The primary structure comprises 968 residues: RNA polymerase-associated protein RapA (968 aa).

The region spanning 164–334 (DVGRRHAPRV…FARLRLLDPN (171 aa)) is the Helicase ATP-binding domain. 177-184 (DEVGLGKT) contributes to the ATP binding site. Residues 280–283 (DEAH) carry the DEAH box motif. Residues 490–662 (RVEWLMGYLT…YLASPDETEG (173 aa)) enclose the Helicase C-terminal domain.

Belongs to the SNF2/RAD54 helicase family. RapA subfamily. Interacts with the RNAP. Has a higher affinity for the core RNAP than for the holoenzyme. Its ATPase activity is stimulated by binding to RNAP.

Transcription regulator that activates transcription by stimulating RNA polymerase (RNAP) recycling in case of stress conditions such as supercoiled DNA or high salt concentrations. Probably acts by releasing the RNAP, when it is trapped or immobilized on tightly supercoiled DNA. Does not activate transcription on linear DNA. Probably not involved in DNA repair. The chain is RNA polymerase-associated protein RapA from Escherichia coli O81 (strain ED1a).